Here is a 187-residue protein sequence, read N- to C-terminus: Keratin-associated protein 5-8 (187 aa).

9 tandem repeats follow at residues 28–31, 34–37, 40–43, 109–112, 119–122, 138–141, 148–151, 167–170, and 177–180. The 9 X 4 AA repeats of C-C-X-P stretch occupies residues 28-180; it reads CCVPICCCKP…CCSQSSCCVP (153 aa).

Belongs to the KRTAP type 5 family. Restricted to hair root, not detected in any other tissues. Expressed in cuticle layers of differentiating hair follicles.

Functionally, in the hair cortex, hair keratin intermediate filaments are embedded in an interfilamentous matrix, consisting of hair keratin-associated protein (KRTAP), which are essential for the formation of a rigid and resistant hair shaft through their extensive disulfide bond cross-linking with abundant cysteine residues of hair keratins. The matrix proteins include the high-sulfur and high-glycine-tyrosine keratins. This is Keratin-associated protein 5-8 (KRTAP5-8) from Homo sapiens (Human).